Here is a 94-residue protein sequence, read N- to C-terminus: Small ribosomal subunit protein uS19 (94 aa).

Belongs to the universal ribosomal protein uS19 family.

Its function is as follows. Protein S19 forms a complex with S13 that binds strongly to the 16S ribosomal RNA. The sequence is that of Small ribosomal subunit protein uS19 from Dictyoglomus thermophilum (strain ATCC 35947 / DSM 3960 / H-6-12).